Here is a 333-residue protein sequence, read N- to C-terminus: Homeobox protein SIX3 (333 aa).

Residues 57 to 71 are compositionally biased toward gly residues; sequence GGAGGAGGGSGGGGS. Disordered stretches follow at residues 57-76, 233-252, and 259-333; these read GGAGGAGGGSGGGGSRAPPE, NPSKKRELAQATGLTPTQVG, and RQRD…ECDV. Positions 73–120 are interaction with TLE5; the sequence is APPEELSMFQLPTLNFSPEQVASVCETLEETGDIERLGRFLWSLPVAP. Residues 207-266 constitute a DNA-binding region (homeobox); it reads GEQKTHCFKERTRSLLREWYLQDPYPNPSKKRELAQATGLTPTQVGNWFKNRRQRDRAAA. Residues 233–235 are bind to RHO promoter; it reads NPS. Low complexity predominate over residues 294 to 310; the sequence is SAESPSTAASPTTSVSS. Over residues 317–333 the composition is skewed to polar residues; it reads TGTSILSVTSSDSECDV.

This sequence belongs to the SIX/Sine oculis homeobox family. As to quaternary structure, interacts with EYA4; translocates EYA4 from the cytoplasm to the nucleus and promotes activation of their target genes. Interacts with MTA1 and HDAC2; represses its own transcription. Interacts with MTA1; facilitates the binding of SIX3 to the core DNA motif of SIX3 promoter. Interacts with EYA1; promotes EYA1 translocation to the nucleus. Interacts with TLE1 and TLE5 (via Q domain); can act in combination with either TLE1 and/or TLE5 leading to transcriptional repression or activation, respectively. Interacts (via homeobox) with NR4A3; differentially regulates the transcriptional activities NR4A3. Interacts with GMNN. Interacts with TLE4. As to expression, expressed in ependymal cells during the formation of the lateral wall.

It is found in the nucleus. In terms of biological role, transcriptional regulator which can act as both a transcriptional repressor and activator by binding a ATTA homeodomain core recognition sequence on these target genes. During forebrain development represses WNT1 expression allowing zona limitans intrathalamica formation and thereby ensuring proper anterio-posterior patterning of the diencephalon and formation of the rostral diencephalon. Acts as a direct upstream activator of SHH expression in the rostral diencephalon ventral midline and that in turn SHH maintains its expression. In addition, Six3 activity is required for the formation of the telencephalon. During postnatal stages of brain development is necessary for ependymal cell maturation by promoting the maturation of radial glia into ependymal cells through regulation of neuroblast proliferation and migration. Acts on the proliferation and differentiation of neural progenitor cells through activating transcription of CCND1 AND CCND2. During early lens formation plays a role in lens induction and specification by activating directly PAX6 in the presumptive lens ectoderm. In turn PAX6 activates SIX3 resulting in activation of PDGFRA and CCND1 promoting cell proliferation. Also is required for the neuroretina development by directly suppressing WNT8B expression in the anterior neural plate territory. Its action during retina development and lens morphogenesis is TLE5 and TLE4-dependent manner. Furthermore, during eye development regulates several genes expression. Before and during early lens development represses the CRYGF promoter by binding a SIX repressor element. Directly activates RHO transcription, or cooperates with CRX or NRL. Six3 also functions in the formation of the proximodistal axis of the optic cup, and promotes the formation of optic vesicles-like structures. During pituitary development, acts in parallel or alternatively with HESX1 to control cell proliferation through Wnt/beta-catenin pathway. Plays a role in eye development by suppressing WNT1 expression and in dorsal-ventral patterning by repressing BMP signaling pathway. This chain is Homeobox protein SIX3 (Six3), found in Mus musculus (Mouse).